Here is a 397-residue protein sequence, read N- to C-terminus: Staphyloferrin A transporter (397 aa).

12 helical membrane passes run 10 to 30 (FLLF…VLTT), 39 to 59 (IVNF…GAIA), 67 to 87 (LLRI…VLTY), 93 to 110 (PISV…LSAV), 137 to 157 (FIIN…LAVY), 162 to 182 (TFLA…PLHF), 213 to 233 (IFIT…LLPV), 245 to 265 (IFGI…LVLP), 271 to 292 (IGMV…LGVV), 296 to 313 (IVIM…SQWA), 333 to 353 (VLSI…LMSI), and 358 to 378 (FGIV…TMVF).

This sequence belongs to the major facilitator superfamily.

It is found in the cell membrane. Functionally, involved in staphyloferrin A secretion. In Staphylococcus aureus (strain NCTC 8325 / PS 47), this protein is Staphyloferrin A transporter.